The chain runs to 341 residues: tRNA N6-adenosine threonylcarbamoyltransferase (341 aa).

Positions 111 and 115 each coordinate Fe cation. Substrate is bound by residues Leu-134–Gly-138, Asp-167, Gly-180, and Asn-270. Fe cation is bound at residue Asp-298.

It belongs to the KAE1 / TsaD family. Fe(2+) is required as a cofactor.

The protein localises to the cytoplasm. It catalyses the reaction L-threonylcarbamoyladenylate + adenosine(37) in tRNA = N(6)-L-threonylcarbamoyladenosine(37) in tRNA + AMP + H(+). Its function is as follows. Required for the formation of a threonylcarbamoyl group on adenosine at position 37 (t(6)A37) in tRNAs that read codons beginning with adenine. Is involved in the transfer of the threonylcarbamoyl moiety of threonylcarbamoyl-AMP (TC-AMP) to the N6 group of A37, together with TsaE and TsaB. TsaD likely plays a direct catalytic role in this reaction. This is tRNA N6-adenosine threonylcarbamoyltransferase from Thiobacillus denitrificans (strain ATCC 25259 / T1).